Reading from the N-terminus, the 268-residue chain is MSDSILFAFSLTLLAGLATGIGSIIGFLSKDVNPKMLTVSLGFSAGVMLYVSMIEIFVKAKDALSVELGDKAGYIWTVIAFFVGIFVIALIDKLVPAYENPHEMNTEKIIEESSAKDKAKLLRMGLFSALAIGIHNFPEGLATFMSGLSNPTLGISIAVAIAIHNIPEGLAVSAPIYFATKSRKKAFVLSFLSGLAEPIGAIAGFFLLRTLFTELTFGLVFASVAGIMVYISLDELLPTAEEYGEHHLAIGGLVGGMLVMAVSLLLFL.

A run of 8 helical transmembrane segments spans residues 5–25 (ILFA…GSII), 38–58 (TVSL…EIFV), 72–92 (AGYI…ALID), 124–144 (MGLF…LATF), 152–172 (TLGI…GLAV), 187–207 (FVLS…GFFL), 211–231 (LFTE…MVYI), and 248–268 (LAIG…LLFL). 2 residues coordinate Fe(2+): Asn136 and Glu139. Glu139 and His164 together coordinate Zn(2+). Asn165, Glu168, and Glu197 together coordinate Fe(2+). Glu168 is a Zn(2+) binding site.

It belongs to the ZIP transporter (TC 2.A.5) family. ZupT subfamily.

The protein localises to the cell inner membrane. The catalysed reaction is Zn(2+)(in) = Zn(2+)(out). Mediates zinc uptake. May also transport other divalent cations. The chain is Zinc transporter ZupT from Chlorobaculum parvum (strain DSM 263 / NCIMB 8327) (Chlorobium vibrioforme subsp. thiosulfatophilum).